The chain runs to 233 residues: Pyridoxine 5'-phosphate synthase (233 aa).

Asn-6 is a binding site for 3-amino-2-oxopropyl phosphate. 8 to 9 serves as a coordination point for 1-deoxy-D-xylulose 5-phosphate; the sequence is DH. Position 17 (Arg-17) interacts with 3-amino-2-oxopropyl phosphate. The active-site Proton acceptor is His-42. 1-deoxy-D-xylulose 5-phosphate contacts are provided by Arg-44 and His-49. Glu-69 acts as the Proton acceptor in catalysis. 1-deoxy-D-xylulose 5-phosphate is bound at residue Thr-99. His-186 serves as the catalytic Proton donor. 3-amino-2-oxopropyl phosphate-binding positions include Gly-187 and 208–209; that span reads GH.

It belongs to the PNP synthase family. In terms of assembly, homooctamer; tetramer of dimers.

It localises to the cytoplasm. The enzyme catalyses 3-amino-2-oxopropyl phosphate + 1-deoxy-D-xylulose 5-phosphate = pyridoxine 5'-phosphate + phosphate + 2 H2O + H(+). It functions in the pathway cofactor biosynthesis; pyridoxine 5'-phosphate biosynthesis; pyridoxine 5'-phosphate from D-erythrose 4-phosphate: step 5/5. Catalyzes the complicated ring closure reaction between the two acyclic compounds 1-deoxy-D-xylulose-5-phosphate (DXP) and 3-amino-2-oxopropyl phosphate (1-amino-acetone-3-phosphate or AAP) to form pyridoxine 5'-phosphate (PNP) and inorganic phosphate. The sequence is that of Pyridoxine 5'-phosphate synthase from Anaplasma phagocytophilum (strain HZ).